The sequence spans 137 residues: Large ribosomal subunit protein uL16 (137 aa).

Residues 1–17 (MLSPKRTKFRKQQRGRM) are compositionally biased toward basic residues. The segment at 1-24 (MLSPKRTKFRKQQRGRMRGNANSG) is disordered.

Belongs to the universal ribosomal protein uL16 family. Part of the 50S ribosomal subunit.

Binds 23S rRNA and is also seen to make contacts with the A and possibly P site tRNAs. This chain is Large ribosomal subunit protein uL16, found in Trichodesmium erythraeum (strain IMS101).